A 247-amino-acid chain; its full sequence is MATNGEEQQSQAGRHQEVGHKSLLQSDALYQYILETSVYPREPECMKELREVTAKHPWNIMTTSADEGQFLNMLLKLVNAKNTMEIGVYTGYSLLATALAIPEDGKILAMDINRENYELGLPVIQKAGVAHKIDFKEGPALPVLDQMIEDGKCHGSFDFIFVDADKDNYINYHKRLIELVKVGGLIGYDNTLWNGSVVAPPDAPMRKYVRYYRDFVLELNKALAADPRIEICMLPVGDGITLCRRIQ.

K21 contributes to the substrate binding site. Residues T63, E85, G87 to V88, S93, D111, and A140 each bind S-adenosyl-L-methionine. D163 lines the substrate pocket. D163 provides a ligand contact to a divalent metal cation. D165 serves as a coordination point for S-adenosyl-L-methionine. Residues D189 and N190 each contribute to the a divalent metal cation site. N194 serves as a coordination point for substrate.

It belongs to the class I-like SAM-binding methyltransferase superfamily. Cation-dependent O-methyltransferase family. CCoAMT subfamily. A divalent metal cation is required as a cofactor.

It catalyses the reaction (E)-caffeoyl-CoA + S-adenosyl-L-methionine = (E)-feruloyl-CoA + S-adenosyl-L-homocysteine + H(+). It participates in aromatic compound metabolism; phenylpropanoid biosynthesis. Functionally, methylates caffeoyl-CoA to feruloyl-CoA and 5-hydroxyferuloyl-CoA to sinapoyl-CoA. Plays a role in the synthesis of feruloylated polysaccharides. Involved in the reinforcement of the plant cell wall. Also involved in the responding to wounding or pathogen challenge by the increased formation of cell wall-bound ferulic acid polymers. The protein is Caffeoyl-CoA O-methyltransferase 1 (CCOAOMT1) of Populus trichocarpa (Western balsam poplar).